The primary structure comprises 102 residues: MQKARIKLSSTSYQELDGVCNNIKTIAEKTGVDMAGPIPLPTKTLKVTTRKSTDGEGSSSFDRWTMRVHKRVIDIEADERTMKHIMKIRIPEAVQIEIELRS.

The interval 34-61 is disordered; that stretch reads MAGPIPLPTKTLKVTTRKSTDGEGSSSF.

This sequence belongs to the universal ribosomal protein uS10 family. In terms of assembly, part of the 30S ribosomal subunit.

In terms of biological role, involved in the binding of tRNA to the ribosomes. The sequence is that of Small ribosomal subunit protein uS10 from Methanococcus aeolicus (strain ATCC BAA-1280 / DSM 17508 / OCM 812 / Nankai-3).